Reading from the N-terminus, the 726-residue chain is Catalase-peroxidase (726 aa).

Residues 91–214 (WHAAGTYRIG…LAAVQMGLIY (124 aa)) constitute a cross-link (tryptophyl-tyrosyl-methioninium (Trp-Tyr) (with M-240)). His-92 functions as the Proton acceptor in the catalytic mechanism. Positions 214-240 (YVNPEGPNGNPDPVAAAIDIRETFRRM) form a cross-link, tryptophyl-tyrosyl-methioninium (Tyr-Met) (with W-91). His-255 is a binding site for heme b. Residues 335-362 (AHQWKPKGNAGAGTVPDPADPSKRRSPS) form a disordered region.

It belongs to the peroxidase family. Peroxidase/catalase subfamily. Homodimer or homotetramer. Heme b serves as cofactor. Formation of the three residue Trp-Tyr-Met cross-link is important for the catalase, but not the peroxidase activity of the enzyme.

The enzyme catalyses H2O2 + AH2 = A + 2 H2O. It carries out the reaction 2 H2O2 = O2 + 2 H2O. Functionally, bifunctional enzyme with both catalase and broad-spectrum peroxidase activity. This is Catalase-peroxidase from Cupriavidus metallidurans (strain ATCC 43123 / DSM 2839 / NBRC 102507 / CH34) (Ralstonia metallidurans).